The sequence spans 306 residues: tRNA N6-adenosine threonylcarbamoyltransferase (306 aa).

2 residues coordinate Fe cation: H110 and H114. Residues 132–136, D165, G178, D182, and N268 contribute to the substrate site; that span reads IASGK. Residue D292 participates in Fe cation binding.

Belongs to the KAE1 / TsaD family. Requires Fe(2+) as cofactor.

Its subcellular location is the cytoplasm. The catalysed reaction is L-threonylcarbamoyladenylate + adenosine(37) in tRNA = N(6)-L-threonylcarbamoyladenosine(37) in tRNA + AMP + H(+). Functionally, required for the formation of a threonylcarbamoyl group on adenosine at position 37 (t(6)A37) in tRNAs that read codons beginning with adenine. Is involved in the transfer of the threonylcarbamoyl moiety of threonylcarbamoyl-AMP (TC-AMP) to the N6 group of A37, together with TsaE and TsaB. TsaD likely plays a direct catalytic role in this reaction. This chain is tRNA N6-adenosine threonylcarbamoyltransferase, found in Malacoplasma penetrans (strain HF-2) (Mycoplasma penetrans).